Here is a 143-residue protein sequence, read N- to C-terminus: Peptidyl-prolyl cis-trans isomerase FKBP15-3 (143 aa).

A PPIase FKBP-type domain is found at 56 to 143; the sequence is GKRVSVHYTG…VFDVELLNVK (88 aa).

The protein belongs to the FKBP-type PPIase family.

The enzyme catalyses [protein]-peptidylproline (omega=180) = [protein]-peptidylproline (omega=0). Its function is as follows. PPIases accelerate the folding of proteins. It catalyzes the cis-trans isomerization of proline imidic peptide bonds in oligopeptides. The chain is Peptidyl-prolyl cis-trans isomerase FKBP15-3 (FKBP15-3) from Arabidopsis thaliana (Mouse-ear cress).